A 536-amino-acid polypeptide reads, in one-letter code: Arylsulfatase K (536 aa).

The signal sequence occupies residues 1 to 24 (MIQKCIALSLFLFSALPEDNIVRA). 2 residues coordinate Ca(2+): aspartate 42 and cysteine 82. Cysteine 82 functions as the Nucleophile in the catalytic mechanism. Cysteine 82 carries the 3-oxoalanine (Cys) modification. Lysine 130 is a binding site for substrate. Asparagine 195 is a glycosylation site (N-linked (GlcNAc...) asparagine). Substrate is bound at residue histidine 253. Residue asparagine 264 is glycosylated (N-linked (GlcNAc...) asparagine). Aspartate 315 and histidine 316 together coordinate Ca(2+). Asparagine 377, asparagine 416, and asparagine 501 each carry an N-linked (GlcNAc...) asparagine glycan.

This sequence belongs to the sulfatase family. It depends on Ca(2+) as a cofactor. Post-translationally, the conversion to 3-oxoalanine (also known as C-formylglycine, FGly), of a serine or cysteine residue in prokaryotes and of a cysteine residue in eukaryotes, is critical for catalytic activity.

The protein resides in the secreted. The protein localises to the lysosome. It carries out the reaction an aryl sulfate + H2O = a phenol + sulfate + H(+). The catalysed reaction is Hydrolysis of the 2-sulfate groups of the 2-O-sulfo-D-glucuronate residues of chondroitin sulfate, heparin and heparitin sulfate.. Catalyzes the hydrolysis of pseudosubstrates such as p-nitrocatechol sulfate and p-nitrophenyl sulfate. Catalyzes the hydrolysis of the 2-sulfate groups of the 2-O-sulfo-D-glucuronate residues of chondroitin sulfate, heparin and heparitin sulfate. Acts selectively on 2-sulfoglucuronate and lacks activity against 2-sulfoiduronate. This is Arylsulfatase K (arsk) from Xenopus laevis (African clawed frog).